Reading from the N-terminus, the 583-residue chain is Aspartate--tRNA(Asp/Asn) ligase (583 aa).

Residue E171 coordinates L-aspartate. The aspartate stretch occupies residues 195-198 (QLFK). R217 contributes to the L-aspartate binding site. ATP is bound by residues 217–219 (RDE) and Q226. L-aspartate is bound at residue H443. E476 lines the ATP pocket. R483 is a binding site for L-aspartate. 528–531 (GLDR) contacts ATP.

This sequence belongs to the class-II aminoacyl-tRNA synthetase family. Type 1 subfamily. In terms of assembly, homodimer.

Its subcellular location is the cytoplasm. The catalysed reaction is tRNA(Asx) + L-aspartate + ATP = L-aspartyl-tRNA(Asx) + AMP + diphosphate. In terms of biological role, aspartyl-tRNA synthetase with relaxed tRNA specificity since it is able to aspartylate not only its cognate tRNA(Asp) but also tRNA(Asn). Reaction proceeds in two steps: L-aspartate is first activated by ATP to form Asp-AMP and then transferred to the acceptor end of tRNA(Asp/Asn). This chain is Aspartate--tRNA(Asp/Asn) ligase, found in Ruthia magnifica subsp. Calyptogena magnifica.